The following is a 234-amino-acid chain: 2,3-bisphosphoglycerate-dependent phosphoglycerate mutase (234 aa).

Residues 10–17, 23–24, Arg62, 89–92, Lys100, 116–117, and 186–187 each bind substrate; these read RHGSSIWN, TG, ERHY, RR, and GN. Residue His11 is the Tele-phosphohistidine intermediate of the active site. Glu89 serves as the catalytic Proton donor/acceptor.

This sequence belongs to the phosphoglycerate mutase family. BPG-dependent PGAM subfamily. As to quaternary structure, homodimer.

The catalysed reaction is (2R)-2-phosphoglycerate = (2R)-3-phosphoglycerate. Its pathway is carbohydrate degradation; glycolysis; pyruvate from D-glyceraldehyde 3-phosphate: step 3/5. Its function is as follows. Catalyzes the interconversion of 2-phosphoglycerate and 3-phosphoglycerate. The protein is 2,3-bisphosphoglycerate-dependent phosphoglycerate mutase of Wigglesworthia glossinidia brevipalpis.